Consider the following 289-residue polypeptide: Acetyl-coenzyme A carboxylase carboxyl transferase subunit beta (289 aa).

Positions 24–289 constitute a CoA carboxyltransferase N-terminal domain; that stretch reads LWIKCPESGE…NSPRRAPIPA (266 aa).

Belongs to the AccD/PCCB family. In terms of assembly, acetyl-CoA carboxylase is a heterohexamer composed of biotin carboxyl carrier protein (AccB), biotin carboxylase (AccC) and two subunits each of ACCase subunit alpha (AccA) and ACCase subunit beta (AccD).

The protein localises to the cytoplasm. The catalysed reaction is N(6)-carboxybiotinyl-L-lysyl-[protein] + acetyl-CoA = N(6)-biotinyl-L-lysyl-[protein] + malonyl-CoA. The protein operates within lipid metabolism; malonyl-CoA biosynthesis; malonyl-CoA from acetyl-CoA: step 1/1. Functionally, component of the acetyl coenzyme A carboxylase (ACC) complex. Biotin carboxylase (BC) catalyzes the carboxylation of biotin on its carrier protein (BCCP) and then the CO(2) group is transferred by the transcarboxylase to acetyl-CoA to form malonyl-CoA. The sequence is that of Acetyl-coenzyme A carboxylase carboxyl transferase subunit beta from Beijerinckia indica subsp. indica (strain ATCC 9039 / DSM 1715 / NCIMB 8712).